The chain runs to 341 residues: Fructose-1,6-bisphosphatase, cytosolic (341 aa).

Mg(2+) is bound by residues E71, E100, D121, L123, and D124. Substrate is bound by residues 124–127 (DGSS), N215, Y247, Y267, and K277. E283 is a Mg(2+) binding site.

Belongs to the FBPase class 1 family. Mg(2+) is required as a cofactor.

It localises to the cytoplasm. The enzyme catalyses beta-D-fructose 1,6-bisphosphate + H2O = beta-D-fructose 6-phosphate + phosphate. This Spinacia oleracea (Spinach) protein is Fructose-1,6-bisphosphatase, cytosolic.